The chain runs to 324 residues: Cytochrome c biogenesis protein CcsA (324 aa).

8 helical membrane-spanning segments follow: residues phenylalanine 15–isoleucine 35, glycine 44–glycine 64, leucine 71–phenylalanine 91, leucine 98–leucine 118, methionine 143–leucine 163, valine 228–asparagine 248, tryptophan 255–leucine 275, and alanine 289–leucine 309.

Belongs to the CcmF/CycK/Ccl1/NrfE/CcsA family. In terms of assembly, may interact with Ccs1.

It localises to the plastid. Its subcellular location is the chloroplast thylakoid membrane. In terms of biological role, required during biogenesis of c-type cytochromes (cytochrome c6 and cytochrome f) at the step of heme attachment. This Daucus carota (Wild carrot) protein is Cytochrome c biogenesis protein CcsA.